Here is a 185-residue protein sequence, read N- to C-terminus: Large ribosomal subunit protein eL19 (185 aa).

Residues 152 to 185 (SDKLTSQQEARRAKNTASRAKRNEKAQIVAKVDV) are disordered.

This sequence belongs to the eukaryotic ribosomal protein eL19 family.

In Tetrahymena thermophila (strain SB210), this protein is Large ribosomal subunit protein eL19 (RPL19).